The chain runs to 282 residues: MIEKRPISNLIGHLMLIIGIIIVVFPIYYTFVASSMSSVEIIRPPMPLVPGTRLAENYSEALSGGVERVVGVSLERLLFNTFVVAIAIAVGKIVISFLSAFAIVFFRFPLRMAFFWMIFITLMLPVEVRILPTYKVIVDLGLIDTYAGLTLPLMASATATFLFRQFFLTIPGELVEAARIDNAGPFRFMRDILLPLSKTNIAALFVILFIYGWTQYLWPLLVTNDSRMNTIIIGLRKMVDFTDASTPWNYVMVTAILAIIPPVAVVVLMQRWFVKGLVETEK.

The next 6 membrane-spanning stretches (helical) occupy residues 14–34, 86–106, 112–132, 136–156, 201–221, and 248–268; these read LMLI…FVAS, IAIA…IVFF, MAFF…RILP, VIVD…LMAS, IAAL…WPLL, and WNYV…VVVL. The region spanning 78 to 269 is the ABC transmembrane type-1 domain; the sequence is LFNTFVVAIA…IPPVAVVVLM (192 aa).

Belongs to the binding-protein-dependent transport system permease family. In terms of assembly, the complex is composed of two ATP-binding proteins (UgpC), two transmembrane proteins (UgpA and UgpE) and a solute-binding protein (UgpB).

The protein localises to the cell inner membrane. Its function is as follows. Part of the ABC transporter complex UgpBAEC involved in sn-glycerol-3-phosphate (G3P) import. Probably responsible for the translocation of the substrate across the membrane. This Rhizobium meliloti (strain 1021) (Ensifer meliloti) protein is sn-glycerol-3-phosphate transport system permease protein UgpE (ugpE).